A 181-amino-acid polypeptide reads, in one-letter code: Oligoribonuclease (181 aa).

The Exonuclease domain occupies 8-171 (LIWIDLEMTG…QDIQESIAEL (164 aa)). The active site involves Tyr129.

Belongs to the oligoribonuclease family.

It localises to the cytoplasm. Its function is as follows. 3'-to-5' exoribonuclease specific for small oligoribonucleotides. The chain is Oligoribonuclease from Shewanella sp. (strain MR-4).